Reading from the N-terminus, the 262-residue chain is Thiamine thiazole synthase (262 aa).

Residues S40, 59–60 (ER), G67, V133, and 159–161 (HID) contribute to the NAD(+) site. Fe cation-binding residues include D161 and H176. Residues S179 and M226 each contribute to the NAD(+) site. R236 contacts glycine.

Belongs to the THI4 family. As to quaternary structure, homooctamer; tetramer of dimers. It depends on Fe(2+) as a cofactor.

The enzyme catalyses hydrogen sulfide + glycine + NAD(+) = ADP-5-ethyl-4-methylthiazole-2-carboxylate + nicotinamide + 3 H2O + H(+). It participates in cofactor biosynthesis; thiamine diphosphate biosynthesis. Involved in the biosynthesis of the thiazole moiety of thiamine. Catalyzes the conversion of NAD and glycine to adenosine diphosphate 5-(2-hydroxyethyl)-4-methylthiazole-2-carboxylate (ADT), an adenylated thiazole intermediate, using free sulfide as a source of sulfur. The protein is Thiamine thiazole synthase of Methanococcus maripaludis (strain C7 / ATCC BAA-1331).